Here is a 206-residue protein sequence, read N- to C-terminus: Thymidylate kinase (206 aa).

ATP is bound at residue 7–14 (GGEGSGKS).

Belongs to the thymidylate kinase family.

The enzyme catalyses dTMP + ATP = dTDP + ADP. Phosphorylation of dTMP to form dTDP in both de novo and salvage pathways of dTTP synthesis. In Chlamydia pneumoniae (Chlamydophila pneumoniae), this protein is Thymidylate kinase (tmk).